A 584-amino-acid chain; its full sequence is ATP synthase subunit alpha, mitochondrial (584 aa).

The N-terminal 24 residues, 1-24 (MRRFGSKFASGLASRCALACPLAS), are a transit peptide targeting the mitochondrion. Residues 207-214 (DRQTGKTS) and Q464 each bind ATP.

The protein belongs to the ATPase alpha/beta chains family. As to quaternary structure, F-type ATPases have 2 components, F(1) - the catalytic core - and F(o) - the membrane proton channel. F(1) has five subunits: alpha(3), beta(3), gamma(1), delta(1), epsilon(1), plus the additional subunit P18 (Tb427.05.1710) that is not present in F(1)F(o) ATP synthase from metazoa. Subunit P18 (Tb927.5.1710) interacts with the alpha subunit with a 1:1 stoichiometry; the interaction is direct. Subunit gamma is part of the central stalk. F(o) has three main subunits: a, b and c. The trypanosomal ATPase complex contains additional subunits that are not present in the F(1)F(o) ATP synthase from metazoa.

It localises to the mitochondrion. It is found in the mitochondrion inner membrane. Functionally, mitochondrial membrane ATP synthase (F(1)F(o) ATP synthase) produces ATP from ADP in the presence of a proton gradient across the membrane which is generated by electron transport complexes of the respiratory chain. F-type ATPases consist of two structural domains, F(1) - containing the extramembraneous catalytic core, and F(o) - containing the membrane proton channel, linked together by a central stalk and a peripheral stalk. During catalysis, ATP synthesis in the catalytic domain of F(1) is coupled via a rotary mechanism of the central stalk subunits to proton translocation. Subunits alpha and beta form the catalytic core in F(1). Rotation of the central stalk against the surrounding alpha(3)beta(3) subunits leads to hydrolysis of ATP in three separate catalytic sites on the beta subunits. Subunit alpha does not bear the catalytic high-affinity ATP-binding sites. Contrary to the procyclic, insect form that requires F(1)F(o) ATP synthase for ATP synthesis, the bloodstream form relies on ATP hydrolysis by F(1)F(o) ATP synthase to maintain its mitochondrial membrane potential. The protein is ATP synthase subunit alpha, mitochondrial of Trypanosoma brucei brucei.